The primary structure comprises 424 residues: Sulfate adenylyltransferase (424 aa).

This sequence belongs to the sulfate adenylyltransferase family.

The enzyme catalyses sulfate + ATP + H(+) = adenosine 5'-phosphosulfate + diphosphate. Its pathway is sulfur metabolism; hydrogen sulfide biosynthesis; sulfite from sulfate: step 1/3. This Desulfatibacillum aliphaticivorans protein is Sulfate adenylyltransferase.